The sequence spans 118 residues: Small ribosomal subunit protein uS13 (118 aa).

The interval 93–118 (RNLPVRGQRSKTNARTRKGPRKPIKR) is disordered.

It belongs to the universal ribosomal protein uS13 family. Part of the 30S ribosomal subunit. Forms a loose heterodimer with protein S19. Forms two bridges to the 50S subunit in the 70S ribosome.

Its function is as follows. Located at the top of the head of the 30S subunit, it contacts several helices of the 16S rRNA. In the 70S ribosome it contacts the 23S rRNA (bridge B1a) and protein L5 of the 50S subunit (bridge B1b), connecting the 2 subunits; these bridges are implicated in subunit movement. Contacts the tRNAs in the A and P-sites. In Saccharophagus degradans (strain 2-40 / ATCC 43961 / DSM 17024), this protein is Small ribosomal subunit protein uS13.